The chain runs to 123 residues: UPF0342 protein LAR_1202 (123 aa).

This sequence belongs to the UPF0342 family.

The sequence is that of UPF0342 protein LAR_1202 from Limosilactobacillus reuteri subsp. reuteri (strain JCM 1112) (Lactobacillus reuteri).